The primary structure comprises 346 residues: Tetraacyldisaccharide 4'-kinase (346 aa).

Thr53 to Thr60 contacts ATP.

It belongs to the LpxK family.

The enzyme catalyses a lipid A disaccharide + ATP = a lipid IVA + ADP + H(+). It participates in glycolipid biosynthesis; lipid IV(A) biosynthesis; lipid IV(A) from (3R)-3-hydroxytetradecanoyl-[acyl-carrier-protein] and UDP-N-acetyl-alpha-D-glucosamine: step 6/6. Its function is as follows. Transfers the gamma-phosphate of ATP to the 4'-position of a tetraacyldisaccharide 1-phosphate intermediate (termed DS-1-P) to form tetraacyldisaccharide 1,4'-bis-phosphate (lipid IVA). This chain is Tetraacyldisaccharide 4'-kinase, found in Bartonella tribocorum (strain CIP 105476 / IBS 506).